Here is a 200-residue protein sequence, read N- to C-terminus: Somatotropin (200 aa).

Positions 1–22 (MARVLVLLSVVVASLLFSQGAT) are cleaved as a signal peptide. Residue H38 participates in Zn(2+) binding. C71 and C173 are joined by a disulfide. Position 182 (E182) interacts with Zn(2+). C190 and C198 are joined by a disulfide.

This sequence belongs to the somatotropin/prolactin family.

The protein localises to the secreted. In terms of biological role, growth hormone plays an important role in growth control and is involved in the regulation of several anabolic processes. Implicated as an osmoregulatory substance important for seawater adaptation. The sequence is that of Somatotropin (gh) from Ictalurus punctatus (Channel catfish).